Here is a 140-residue protein sequence, read N- to C-terminus: MSRTIMAFDFGTKSIGSAIGQEITGTASPLKAFKANDGIPNWDEIEKQIKEWQPNLLVVGLPTDLHGKALETITPRAKKFAQRLQGRFALPVELHDERLSTTEARSELFSMGGYKALSKGNVDCQSAVIILESWFEAQWG.

Belongs to the YqgF nuclease family.

Its subcellular location is the cytoplasm. Its function is as follows. Could be a nuclease involved in processing of the 5'-end of pre-16S rRNA. This chain is Putative pre-16S rRNA nuclease, found in Vibrio vulnificus (strain YJ016).